A 249-amino-acid chain; its full sequence is Type III pantothenate kinase (249 aa).

6-13 (DCGNSFIK) is a binding site for ATP. Residues Tyr-93 and 100–103 (GLDR) contribute to the substrate site. Catalysis depends on Asp-102, which acts as the Proton acceptor. Asp-122 lines the K(+) pocket. Thr-125 provides a ligand contact to ATP. Substrate is bound at residue Thr-181.

This sequence belongs to the type III pantothenate kinase family. As to quaternary structure, homodimer. The cofactor is NH4(+). It depends on K(+) as a cofactor.

The protein localises to the cytoplasm. The enzyme catalyses (R)-pantothenate + ATP = (R)-4'-phosphopantothenate + ADP + H(+). The protein operates within cofactor biosynthesis; coenzyme A biosynthesis; CoA from (R)-pantothenate: step 1/5. Functionally, catalyzes the phosphorylation of pantothenate (Pan), the first step in CoA biosynthesis. This Pseudomonas fluorescens (strain Pf0-1) protein is Type III pantothenate kinase.